Consider the following 598-residue polypeptide: Mitochondrial distribution and morphology protein 30 (598 aa).

The F-box domain maps to 13–59; it reads SFTIDHLPPEIWLCISKLVGTSDLHNLCLINRRLYLTITSDEIWKRR.

As to quaternary structure, interacts with SKP1. Component of the probable SCF(MDM30) complex containing CDC53, SKP1, RBX1 and MDM30. Interacts with SKP1 and FZO1.

It localises to the cytoplasm. The protein resides in the mitochondrion. The protein operates within protein modification; protein ubiquitination. In terms of biological role, substrate recognition component of a SCF (SKP1-CUL1-F-box protein) E3 ubiquitin-protein ligase complex which mediates the ubiquitination and subsequent proteasomal degradation of target proteins. Probably recognizes and binds to phosphorylated target proteins. Recognizes FZO1 and regulates the amount of FZO1. Regulatory factor for the mitochondrial fusion machinery. Required for mitochondrial DNA maintenance. This chain is Mitochondrial distribution and morphology protein 30 (MDM30), found in Saccharomyces cerevisiae (strain ATCC 204508 / S288c) (Baker's yeast).